The sequence spans 432 residues: 3-phosphoshikimate 1-carboxyvinyltransferase (432 aa).

3 residues coordinate 3-phosphoshikimate: lysine 23, serine 24, and arginine 28. Position 23 (lysine 23) interacts with phosphoenolpyruvate. The phosphoenolpyruvate site is built by glycine 96 and arginine 125. 3-phosphoshikimate is bound by residues serine 170, glutamine 172, aspartate 318, and lysine 345. Residue glutamine 172 coordinates phosphoenolpyruvate. Aspartate 318 functions as the Proton acceptor in the catalytic mechanism. 2 residues coordinate phosphoenolpyruvate: arginine 349 and arginine 391.

The protein belongs to the EPSP synthase family. In terms of assembly, monomer.

Its subcellular location is the cytoplasm. It carries out the reaction 3-phosphoshikimate + phosphoenolpyruvate = 5-O-(1-carboxyvinyl)-3-phosphoshikimate + phosphate. It functions in the pathway metabolic intermediate biosynthesis; chorismate biosynthesis; chorismate from D-erythrose 4-phosphate and phosphoenolpyruvate: step 6/7. Its function is as follows. Catalyzes the transfer of the enolpyruvyl moiety of phosphoenolpyruvate (PEP) to the 5-hydroxyl of shikimate-3-phosphate (S3P) to produce enolpyruvyl shikimate-3-phosphate and inorganic phosphate. In Gloeobacter violaceus (strain ATCC 29082 / PCC 7421), this protein is 3-phosphoshikimate 1-carboxyvinyltransferase.